A 2149-amino-acid polypeptide reads, in one-letter code: Polyketide synthase 1 (2149 aa).

Residues 19–261 are N-terminal acylcarrier protein transacylase domain (SAT); sequence FIFGDQSSCN…TRLAVHAPYH (243 aa). A Ketosynthase family 3 (KS3) domain is found at 394–829; sequence ESKIAIIGMS…GGNTALLVED (436 aa). Residues C566, H701, and H745 each act as for beta-ketoacyl synthase activity in the active site. Residues 929 to 1233 are malonyl-CoA:ACP transacylase (MAT) domain; that stretch reads AFVFSGQGSQ…PSLMRNKDGW (305 aa). Residue S1018 is the For acyl/malonyl transferase activity of the active site. Residues 1310 to 1624 are product template (PT) domain; sequence TASVHRIVHE…RKVLNTAMPP (315 aa). The segment at 1314-1447 is N-terminal hotdog fold; the sequence is HRIVHESVDK…SSLHFERPKV (134 aa). The PKS/mFAS DH domain maps to 1314–1619; that stretch reads HRIVHESVDK…FQGIPRKVLN (306 aa). Catalysis depends on H1346, which acts as the Proton acceptor; for dehydratase activity. Residues 1474 to 1619 are C-terminal hotdog fold; the sequence is LNSRMSSGVI…FQGIPRKVLN (146 aa). D1533 functions as the Proton donor; for dehydratase activity in the catalytic mechanism. Residues 1619-1657 are disordered; the sequence is NTAMPPPKSQNEAPVRSAPAKPAAKPPKSASSEHSGHFA. Positions 1635–1650 are enriched in low complexity; the sequence is SAPAKPAAKPPKSASS. The 75-residue stretch at 1678 to 1752 folds into the Carrier 1 domain; the sequence is RNPMLAVFKI…DLATHLGLDT (75 aa). Position 1712 is an O-(pantetheine 4'-phosphoryl)serine (S1712). Residues 1755–1790 show a composition bias toward low complexity; that stretch reads SDQSSGQSSSSGGLSPRSDSIGEITSSATTPPSLSP. Positions 1755–1796 are disordered; it reads SDQSSGQSSSSGGLSPRSDSIGEITSSATTPPSLSPRGSVSG. Positions 1793 to 1870 constitute a Carrier 2 domain; it reads SVSGSQCKDV…SFKHMFQQGH (78 aa). S1830 is subject to O-(pantetheine 4'-phosphoryl)serine. The tract at residues 1882 to 2147 is thioesterase (TE) domain; the sequence is LKQYRATSTL…ERVAAFIRST (266 aa). Catalysis depends on S1973, which acts as the For thioesterase activity.

Functionally, polyketide synthase; part of the Pks1 gene cluster that mediates the biosynthesis of an anthraquinone derivative pigment that contributes to conidial pigmentation that provides protection from UV radiation, heat and cold stress. The polyketide synthase Pks1 produces 1-acetyl-2,4,6,8-tetrahydroxy-9,10-anthraquinone though condensation of acetyl-CoA with malonyl-CoA. The dehydratase EthD and the laccase Mlac1 further convert the anthraquinone derivative into the final conidial pigment. The chain is Polyketide synthase 1 from Metarhizium majus (strain ARSEF 297).